Reading from the N-terminus, the 42-residue chain is Photosystem II reaction center protein J (42 aa).

A helical transmembrane segment spans residues 10–30 (IPLWLIATVAGILVLTVVGIF).

The protein belongs to the PsbJ family. In terms of assembly, PSII is composed of 1 copy each of membrane proteins PsbA, PsbB, PsbC, PsbD, PsbE, PsbF, PsbH, PsbI, PsbJ, PsbK, PsbL, PsbM, PsbT, PsbX, PsbY, PsbZ, Psb30/Ycf12, at least 3 peripheral proteins of the oxygen-evolving complex and a large number of cofactors. It forms dimeric complexes.

Its subcellular location is the plastid. The protein resides in the chloroplast thylakoid membrane. One of the components of the core complex of photosystem II (PSII). PSII is a light-driven water:plastoquinone oxidoreductase that uses light energy to abstract electrons from H(2)O, generating O(2) and a proton gradient subsequently used for ATP formation. It consists of a core antenna complex that captures photons, and an electron transfer chain that converts photonic excitation into a charge separation. This chain is Photosystem II reaction center protein J, found in Chara vulgaris (Common stonewort).